Here is a 134-residue protein sequence, read N- to C-terminus: Mite allergen Blo t 5 (134 aa).

The signal sequence occupies residues 1–17 (MKFAIVLIACFAASVLA). Positions 18-113 (QEHKPKKDDF…RFNYEEAQTL (96 aa)) form a coiled coil.

It belongs to the mite group 5 allergen family. As to quaternary structure, may exist as homodimer and homotrimer. In terms of tissue distribution, midgut and hindgut contents as well as fecal pellets (at protein level).

This is Mite allergen Blo t 5 (BLOT5) from Blomia tropicalis (Mite).